The chain runs to 333 residues: Transaldolase (333 aa).

Lysine 135 serves as the catalytic Schiff-base intermediate with substrate.

It belongs to the transaldolase family. Type 1 subfamily. In terms of assembly, homodimer.

Its subcellular location is the cytoplasm. The catalysed reaction is D-sedoheptulose 7-phosphate + D-glyceraldehyde 3-phosphate = D-erythrose 4-phosphate + beta-D-fructose 6-phosphate. The protein operates within carbohydrate degradation; pentose phosphate pathway; D-glyceraldehyde 3-phosphate and beta-D-fructose 6-phosphate from D-ribose 5-phosphate and D-xylulose 5-phosphate (non-oxidative stage): step 2/3. In terms of biological role, transaldolase is important for the balance of metabolites in the pentose-phosphate pathway. This is Transaldolase from Prochlorococcus marinus (strain MIT 9312).